Reading from the N-terminus, the 155-residue chain is Large ribosomal subunit protein uL11 (155 aa).

The protein belongs to the universal ribosomal protein uL11 family. Part of the ribosomal stalk of the 50S ribosomal subunit. Interacts with L10 and the large rRNA to form the base of the stalk. L10 forms an elongated spine to which L12 dimers bind in a sequential fashion forming a multimeric L10(L12)X complex. One or more lysine residues are methylated.

Functionally, forms part of the ribosomal stalk which helps the ribosome interact with GTP-bound translation factors. The protein is Large ribosomal subunit protein uL11 of Malacoplasma penetrans (strain HF-2) (Mycoplasma penetrans).